Here is a 490-residue protein sequence, read N- to C-terminus: 2-succinylbenzoate--CoA ligase (490 aa).

The protein belongs to the ATP-dependent AMP-binding enzyme family. MenE subfamily.

It carries out the reaction 2-succinylbenzoate + ATP + CoA = 2-succinylbenzoyl-CoA + AMP + diphosphate. The protein operates within quinol/quinone metabolism; 1,4-dihydroxy-2-naphthoate biosynthesis; 1,4-dihydroxy-2-naphthoate from chorismate: step 5/7. It functions in the pathway quinol/quinone metabolism; menaquinone biosynthesis. Functionally, converts 2-succinylbenzoate (OSB) to 2-succinylbenzoyl-CoA (OSB-CoA). This is 2-succinylbenzoate--CoA ligase from Geobacillus kaustophilus (strain HTA426).